Reading from the N-terminus, the 295-residue chain is Protease HtpX homolog (295 aa).

Transmembrane regions (helical) follow at residues 6-26 and 40-60; these read IGLF…VTSV and LSSL…VSLL. His148 contacts Zn(2+). The active site involves Glu149. Residue His152 participates in Zn(2+) binding. The next 2 helical transmembrane spans lie at 163–183 and 198–218; these read LIQG…SYAL and IANI…VAYF. Position 223 (Glu223) interacts with Zn(2+).

Belongs to the peptidase M48B family. The cofactor is Zn(2+).

It localises to the cell inner membrane. The sequence is that of Protease HtpX homolog from Leptospira interrogans serogroup Icterohaemorrhagiae serovar copenhageni (strain Fiocruz L1-130).